We begin with the raw amino-acid sequence, 371 residues long: Epoxyqueuosine reductase (371 aa).

The active-site Proton donor is Asp-137. The 4Fe-4S ferredoxin-type domain occupies 179 to 211 (IPLPVDTPVENQCGKCTACISSCPTNAILENGV). [4Fe-4S] cluster-binding residues include Cys-191, Cys-194, Cys-197, Cys-201, Cys-217, Cys-244, Cys-247, and Cys-251.

Belongs to the QueG family. Monomer. The cofactor is cob(II)alamin. [4Fe-4S] cluster is required as a cofactor.

It is found in the cytoplasm. It carries out the reaction epoxyqueuosine(34) in tRNA + AH2 = queuosine(34) in tRNA + A + H2O. It participates in tRNA modification; tRNA-queuosine biosynthesis. Functionally, catalyzes the conversion of epoxyqueuosine (oQ) to queuosine (Q), which is a hypermodified base found in the wobble positions of tRNA(Asp), tRNA(Asn), tRNA(His) and tRNA(Tyr). This is Epoxyqueuosine reductase from Aliivibrio fischeri (strain ATCC 700601 / ES114) (Vibrio fischeri).